An 89-amino-acid polypeptide reads, in one-letter code: UPF0237 protein CA_C0478 (89 aa).

Positions 4 to 78 constitute an ACT domain; sequence IITVIGKDKV…KKLGVSIKIQ (75 aa).

Belongs to the UPF0237 family.

This Clostridium acetobutylicum (strain ATCC 824 / DSM 792 / JCM 1419 / IAM 19013 / LMG 5710 / NBRC 13948 / NRRL B-527 / VKM B-1787 / 2291 / W) protein is UPF0237 protein CA_C0478.